A 532-amino-acid chain; its full sequence is Flavin-containing monooxygenase 3 (532 aa).

FAD contacts are provided by residues 9–13 (GAGVS), Glu-32, 40–41 (LW), and 61–62 (NS). Residues 60–61 (SN) and 195–198 (SGCD) each bind NADP(+). Phosphoserine is present on Ser-401. A helical transmembrane segment spans residues 510 to 530 (FFFHWLKLFAIPILLIAVFLV).

This sequence belongs to the FMO family. It depends on FAD as a cofactor. As to expression, liver.

It is found in the microsome membrane. Its subcellular location is the endoplasmic reticulum membrane. It catalyses the reaction trimethylamine + NADPH + O2 = trimethylamine N-oxide + NADP(+) + H2O. The catalysed reaction is N,N-dimethylaniline + NADPH + O2 + H(+) = N,N-dimethylaniline N-oxide + NADP(+) + H2O. It carries out the reaction hypotaurine + NADPH + O2 + H(+) = taurine + NADP(+) + H2O. The enzyme catalyses (S)-nicotine + NADPH + O2 = trans-(S)-nicotine N(1')-oxide + NADP(+) + H2O. It catalyses the reaction albendazole + NADPH + O2 + H(+) = albendazole S-oxide + NADP(+) + H2O. Functionally, essential hepatic enzyme that catalyzes the oxygenation of a wide variety of nitrogen- and sulfur-containing compounds including drugs as well as dietary compounds. Plays an important role in the metabolism of trimethylamine (TMA), via the production of trimethylamine N-oxide (TMAO) metabolite. TMA is generated by the action of gut microbiota using dietary precursors such as choline, choline containing compounds, betaine or L-carnitine. By regulating TMAO concentration, FMO3 directly impacts both platelet responsiveness and rate of thrombus formation. This Homo sapiens (Human) protein is Flavin-containing monooxygenase 3 (FMO3).